The following is a 1214-amino-acid chain: MAAVRVVAPAPSVLLLVAAAVVLLHLARAIAGAADEAAALLAFKDASVAADPGGALAGWANSTTPGSPCAWAGVSCAAGRVRALDLSGMSLSGRLRLDALLALSALRRLDLRGNAFHGDLSRHGSPRRAAPCALVEVDISSNTFNGTLPRAFLASCGGLQTLNLSRNSLTGGGYPFPPSLRRLDMSRNQLSDAGLLNYSLTGCHGIQYLNLSANQFTGSLPGLAPCTEVSVLDLSWNLMSGVLPPRFVAMAPANLTYLSIAGNNFSMDISDYEFGGCANLTLLDWSYNRLRSTGLPRSLVDCRRLEALDMSGNKLLSGPIPTFLVELQALRRLSLAGNRFTGEISDKLSILCKTLVELDLSSNQLIGSLPASFGQCRFLQVLDLGNNQLSGDFVETVITNISSLRVLRLPFNNITGANPLPALASRCPLLEVIDLGSNEFDGEIMPDLCSSLPSLRKLLLPNNYINGTVPSSLSNCVNLESIDLSFNLLVGQIPPEILFLLKLVDLVLWANNLSGEIPDKFCFNSTALETLVISYNSFTGNIPESITRCVNLIWLSLAGNNLTGSIPSGFGNLQNLAILQLNKNSLSGKVPAELGSCSNLIWLDLNSNELTGTIPPQLAAQAGLITGAIVSGKQFAFLRNEAGNICPGAGVLFEFLDIRPDRLANFPAVHLCSSTRIYTGTTVYTFRNNGSMIFLDLSYNSLTGTIPASFGNMTYLEVLNLGHNELTGAIPDAFTGLKGIGALDLSHNHLTGVIPPGFGCLHFLADFDVSNNNLTGEIPTSGQLITFPASRYENNSGLCGIPLNPCVHNSGAGGLPQTSYGHRNFARQSVFLAVTLSVLILFSLLIIHYKLWKFHKNKTKEIQAGCSESLPGSSKSSWKLSGIGEPLSINMAIFENPLRKLTFSDLHQATNGFCAETLIGSGGFGEVYKAKLKDGNIVAVKKLMHFTGQGDREFTAEMETIGKIKHRNLVPLLGYCKIGDERLLVYEYMKNGSLDFVLHDKGEANMDLNWATRKKIAIGSARGLAFLHHSCVPHIIHRDMKSSNVLLDGNFDAYVSDFGMARLMNALDSHLTVSMLSGTPGYVPPEYCQDFRCTTKGDVYSYGVVLLELLTGKKPIDPTEFGDSNLVGWVKQMVEDRCSEIYDPTLMATTSSELELYQYLKIACRCLDDQPNRRPTMIQVMTMFKEFQVDSGSNFLDDFSLNSTNMEESSEKSV.

The N-terminal stretch at 1 to 29 (MAAVRVVAPAPSVLLLVAAAVVLLHLARA) is a signal peptide. Asn-61 is a glycosylation site (N-linked (GlcNAc...) asparagine). The short motif at 69-76 (CAWAGVSC) is the Cys pair 1 element. LRR repeat units follow at residues 103 to 127 (LSALRRLDLRGNAFHGDLSRHGSPR), 131 to 155 (PCALVEVDISSNTFNGTLPRAFLAS), 156 to 177 (CGGLQTLNLSRNSLTGGGYPFP), 178 to 202 (PSLRRLDMSRNQLSDAGLLNYSLTG), 204 to 228 (HGIQYLNLSANQFTGSLPGLAPCTE), 230 to 250 (SVLDLSWNLMSGVLPPRFVAM), 252 to 276 (PANLTYLSIAGNNFSMDISDYEFGG), 277 to 302 (CANLTLLDWSYNRLRSTGLPRSLVDC), 303 to 325 (RRLEALDMSGNKLLSGPIPTFLV), 327 to 351 (LQALRRLSLAGNRFTGEISDKLSIL), 353 to 375 (KTLVELDLSSNQLIGSLPASFGQ), 377 to 400 (RFLQVLDLGNNQLSGDFVETVITN), 401 to 427 (ISSLRVLRLPFNNITGANPLPALASRC), 429 to 451 (LLEVIDLGSNEFDGEIMPDLCSS), 452 to 476 (LPSLRKLLLPNNYINGTVPSSLSNC), 478 to 500 (NLESIDLSFNLLVGQIPPEILFL), 502 to 525 (KLVDLVLWANNLSGEIPDKFCFNS), 526 to 549 (TALETLVISYNSFTGNIPESITRC), 550 to 572 (VNLIWLSLAGNNLTGSIPSGFGN), 573 to 597 (LQNLAILQLNKNSLSGKVPAELGSC), 599 to 621 (NLIWLDLNSNELTGTIPPQLAAQ), and 650 to 673 (GVLFEFLDIRPDRLANFPAVHLCS). N-linked (GlcNAc...) asparagine glycosylation is found at Asn-145, Asn-163, Asn-197, and Asn-210. 3 N-linked (GlcNAc...) asparagine glycosylation sites follow: Asn-254, Asn-264, and Asn-279. N-linked (GlcNAc...) asparagine glycans are attached at residues Asn-400 and Asn-413. An N-linked (GlcNAc...) asparagine glycan is attached at Asn-466. N-linked (GlcNAc...) asparagine glycosylation is found at Asn-512 and Asn-524. Asn-561 carries N-linked (GlcNAc...) asparagine glycosylation. Tyr-678 provides a ligand contact to brassinolide. LRR repeat units follow at residues 689-712 (NGSMIFLDLSYNSLTGTIPASFGN), 713-736 (MTYLEVLNLGHNELTGAIPDAFTG), 738-760 (KGIGALDLSHNHLTGVIPPGFGC), and 762-786 (HFLADFDVSNNNLTGEIPTSGQLIT). Positions 799 to 806 (CGIPLNPC) match the Cys pair 2 motif. Residues 829–849 (SVFLAVTLSVLILFSLLIIHY) form a helical membrane-spanning segment. Positions 913–1196 (FCAETLIGSG…FQVDSGSNFL (284 aa)) constitute a Protein kinase domain. Residues 919–927 (IGSGGFGEV), Lys-941, 987–989 (EYM), 993–996 (SLDF), 1039–1044 (DMKSSN), and Asp-1057 contribute to the ATP site. Asp-1039 functions as the Proton acceptor in the catalytic mechanism.

The protein belongs to the protein kinase superfamily. Ser/Thr protein kinase family. As to expression, highly expressed in roots. Expressed at low levels in shoots.

The protein localises to the cell membrane. It catalyses the reaction L-seryl-[protein] + ATP = O-phospho-L-seryl-[protein] + ADP + H(+). It carries out the reaction L-threonyl-[protein] + ATP = O-phospho-L-threonyl-[protein] + ADP + H(+). In terms of biological role, may be involved in brassenosteroid (BR) perception in roots. This is Brassinosteroid LRR receptor kinase BRL3 from Oryza sativa subsp. japonica (Rice).